A 473-amino-acid chain; its full sequence is FAD-dependent oxidoreductase dpchF (473 aa).

Residues 1–21 (MKLSFIASPVWALALAQFAAA) form the signal peptide. N-linked (GlcNAc...) asparagine glycans are attached at residues asparagine 98, asparagine 128, asparagine 181, asparagine 262, and asparagine 330.

It belongs to the beta-cyclopiazonate dehydrogenase family. FAD is required as a cofactor.

It participates in secondary metabolite biosynthesis; terpenoid biosynthesis. Its function is as follows. FAD-dependent oxidoreductase; part of the gene cluster that mediates the biosynthesis of the diterpenoid pyrones higginsianins A and B. The first step of the pathway is the synthesis of the alpha-pyrone moiety by the polyketide synthase dpchA via condensation of one acetyl-CoA starter unit with 3 malonyl-CoA units and 2 methylations. The alpha-pyrone is then combined with geranylgeranyl pyrophosphate (GGPP) formed by the GGPP synthase dpchD through the action of the prenyltransferase dpchC to yield a linear alpha-pyrone diterpenoid. Subsequent steps in the diterpenoid pyrone biosynthetic pathway involve the decalin core formation, which is initiated by the epoxidation of the C10-C11 olefin by the FAD-dependent oxidoreductase dpchE, and is followed by a cyclization cascade catalyzed by the terpene cyclase dpchB. The short chain dehydrogenase/reductase dpchG then oxidizes the 8S hydroxy group to a ketone and the short chain dehydrogenase/reductase dpchH reduces the ketone to the 8R hydroxy group to yield higginsianin B. Finally, the FAD-dependent oxidoreductase dpchF converts higginsianin B into higginsianin A. This Colletotrichum higginsianum (strain IMI 349063) (Crucifer anthracnose fungus) protein is FAD-dependent oxidoreductase dpchF.